The primary structure comprises 438 residues: Serine hydroxymethyltransferase (438 aa).

(6S)-5,6,7,8-tetrahydrofolate is bound by residues Leu-133 and 137–139; that span reads GHL. Lys-242 bears the N6-(pyridoxal phosphate)lysine mark.

The protein belongs to the SHMT family. In terms of assembly, homodimer. It depends on pyridoxal 5'-phosphate as a cofactor.

The protein localises to the cytoplasm. The enzyme catalyses (6R)-5,10-methylene-5,6,7,8-tetrahydrofolate + glycine + H2O = (6S)-5,6,7,8-tetrahydrofolate + L-serine. Its pathway is one-carbon metabolism; tetrahydrofolate interconversion. It participates in amino-acid biosynthesis; glycine biosynthesis; glycine from L-serine: step 1/1. Its function is as follows. Catalyzes the reversible interconversion of serine and glycine with tetrahydrofolate (THF) serving as the one-carbon carrier. This reaction serves as the major source of one-carbon groups required for the biosynthesis of purines, thymidylate, methionine, and other important biomolecules. Also exhibits THF-independent aldolase activity toward beta-hydroxyamino acids, producing glycine and aldehydes, via a retro-aldol mechanism. The sequence is that of Serine hydroxymethyltransferase from Brucella melitensis biotype 2 (strain ATCC 23457).